The chain runs to 528 residues: Probable rhamnogalacturonate lyase A (528 aa).

An N-terminal signal peptide occupies residues methionine 1–alanine 20. Intrachain disulfides connect cysteine 50–cysteine 93 and cysteine 184–cysteine 193.

The protein belongs to the polysaccharide lyase 4 family.

The protein resides in the secreted. It carries out the reaction Endotype eliminative cleavage of L-alpha-rhamnopyranosyl-(1-&gt;4)-alpha-D-galactopyranosyluronic acid bonds of rhamnogalacturonan I domains in ramified hairy regions of pectin leaving L-rhamnopyranose at the reducing end and 4-deoxy-4,5-unsaturated D-galactopyranosyluronic acid at the non-reducing end.. Functionally, pectinolytic enzymes consist of four classes of enzymes: pectin lyase, polygalacturonase, pectin methylesterase and rhamnogalacturonase. Degrades the rhamnogalacturonan I (RG-I) backbone of pectin. This Aspergillus flavus (strain ATCC 200026 / FGSC A1120 / IAM 13836 / NRRL 3357 / JCM 12722 / SRRC 167) protein is Probable rhamnogalacturonate lyase A (rglA).